Here is a 942-residue protein sequence, read N- to C-terminus: DNA polymerase I (942 aa).

The 5'-3' exonuclease domain occupies 177–269 (EPDQLADLRG…LEAARIGVYD (93 aa)). The 3'-5' exonuclease domain occupies 340–522 (TIVRDATALA…LTERLQRQLE (183 aa)).

This sequence belongs to the DNA polymerase type-A family. In terms of assembly, single-chain monomer with multiple functions.

It carries out the reaction DNA(n) + a 2'-deoxyribonucleoside 5'-triphosphate = DNA(n+1) + diphosphate. Its function is as follows. In addition to polymerase activity, this DNA polymerase exhibits 3'-5' and 5'-3' exonuclease activity. The chain is DNA polymerase I (polA) from Chloroflexus aurantiacus (strain ATCC 29366 / DSM 635 / J-10-fl).